An 853-amino-acid chain; its full sequence is Dynein axonemal assembly factor 5 (853 aa).

A2 is subject to N-acetylalanine. HEAT repeat units lie at residues 69-107 (GPWA…RAAR), 200-238 (HMQS…FGSG), 240-276 (SVDD…NLRD), 278-316 (YSFL…QWQQ), 374-412 (RVKA…DEEK), 597-636 (GEAL…RPKD), 694-732 (QEAQ…NSGD), 736-774 (PEKF…CIES), and 782-820 (QSSV…LFPD).

This sequence belongs to the DNAAF5 family. As to quaternary structure, interacts with DNAI2; probably involved in outer arm dynein assembly. As to expression, expressed in ciliated cells including ependymal cells lining the lateral ventricles and multiciliated epithelium of oviduct ampulla.

It is found in the cytoplasm. It localises to the cytoplasmic granule. Its function is as follows. Cytoplasmic protein involved in the delivery of the dynein machinery to the motile cilium. It is required for the assembly of the axonemal dynein inner and outer arms, two structures attached to the peripheral outer doublet A microtubule of the axoneme, that play a crucial role in cilium motility. The protein is Dynein axonemal assembly factor 5 of Mus musculus (Mouse).